A 230-amino-acid chain; its full sequence is MSPLSNFARTALACAVAALLGGCVIAGDVRPYPTMAPIQPIMPPQAQPTAGAIYAAGPTLQLYSDRRARDVGDLLTISLLENTTAQTSANTATNKESNLSLGTPSIFGAPVTLGGKDILSASAKGARDFTGKGNSAQSNRLQGNVTVTVIQRLPNGNLVVQGQKNLRLNQGDELVQVQGIVRPGDISQDNTIPSSRVAEARIVYGGRGPVAQSNAMGWLSRFFNSGLTPF.

Residues 1-22 (MSPLSNFARTALACAVAALLGG) form the signal peptide. Cys-23 carries N-palmitoyl cysteine lipidation. A lipid anchor (S-diacylglycerol cysteine) is attached at Cys-23.

The protein belongs to the FlgH family. In terms of assembly, the basal body constitutes a major portion of the flagellar organelle and consists of four rings (L,P,S, and M) mounted on a central rod.

Its subcellular location is the cell outer membrane. The protein resides in the bacterial flagellum basal body. Assembles around the rod to form the L-ring and probably protects the motor/basal body from shearing forces during rotation. This Stenotrophomonas maltophilia (strain R551-3) protein is Flagellar L-ring protein.